Consider the following 425-residue polypeptide: D-arabinitol transporter (425 aa).

Topologically, residues 1–7 (MSINNKQ) are cytoplasmic. A helical transmembrane segment spans residues 8–28 (WLGLPLNLLWGYIAIAVFMTG). Over 29–51 (DGFELAFLSHYIKALGFSPAEAS) the chain is Extracellular. Residues 52–72 (FAFTLYGLAAALSAWISGVVA) form a helical membrane-spanning segment. Over 73-80 (EIITPLKT) the chain is Cytoplasmic. Residues 81–101 (MMIGFVLWCVFHVLFLVFGLG) traverse the membrane as a helical segment. Over 102-107 (HANYAL) the chain is Extracellular. The helical transmembrane segment at 108-128 (ILLFYGIRGFAYPLFLYSFIV) threads the bilayer. Over 129 to 141 (AIVHNVKSDNASS) the chain is Cytoplasmic. A helical membrane pass occupies residues 142 to 162 (AIGWFWAVYSIGIGVFGSYIP). The Extracellular segment spans residues 163 to 172 (SFTIPHIGEM). The helical transmembrane segment at 173-193 (GTLWLALAFCLTGGVIALVSL) threads the bilayer. Residues 194–237 (RHIQTPQHMQNLTTREKFSELGRAATLLYTNRNILLSSMVRIIN) are Cytoplasmic-facing. The chain crosses the membrane as a helical span at residues 238 to 258 (TLSLFGFAVIMPMMFVDELGF). Residues 259–263 (STSEW) lie on the Extracellular side of the membrane. Residues 264-284 (LQVWAVFFFTTIFSNVLWGIL) form a helical membrane-spanning segment. The Cytoplasmic portion of the chain corresponds to 285–295 (GEKLGWMKVVR). A helical membrane pass occupies residues 296–316 (WFGCIGMALSSLAFYYIPQHF). The Extracellular portion of the chain corresponds to 317-323 (GHSFAMA). The chain crosses the membrane as a helical span at residues 324–344 (LIPAIALGIFVAAFVPLAAVF). At 345–360 (PALEPKHKGAAISVYN) the chain is on the cytoplasmic side. Residues 361–381 (LSAGMSNFLAPAIAVVLLPFF) traverse the membrane as a helical segment. Residues 382 to 383 (ST) lie on the Extracellular side of the membrane. The helical transmembrane segment at 384 to 404 (IGVVIAYTALYVVAFFLCAFI) threads the bilayer. The Cytoplasmic portion of the chain corresponds to 405-425 (RVEQPGFSHKEATAREQVEFS).

This sequence belongs to the major facilitator superfamily. Sugar transporter (TC 2.A.1.1) family. CsbX subfamily.

The protein localises to the cell membrane. This chain is D-arabinitol transporter (dalT), found in Klebsiella pneumoniae.